The following is a 601-amino-acid chain: Proline--tRNA ligase (601 aa).

It belongs to the class-II aminoacyl-tRNA synthetase family. ProS type 1 subfamily. As to quaternary structure, homodimer.

It is found in the cytoplasm. It carries out the reaction tRNA(Pro) + L-proline + ATP = L-prolyl-tRNA(Pro) + AMP + diphosphate. In terms of biological role, catalyzes the attachment of proline to tRNA(Pro) in a two-step reaction: proline is first activated by ATP to form Pro-AMP and then transferred to the acceptor end of tRNA(Pro). As ProRS can inadvertently accommodate and process non-cognate amino acids such as alanine and cysteine, to avoid such errors it has two additional distinct editing activities against alanine. One activity is designated as 'pretransfer' editing and involves the tRNA(Pro)-independent hydrolysis of activated Ala-AMP. The other activity is designated 'posttransfer' editing and involves deacylation of mischarged Ala-tRNA(Pro). The misacylated Cys-tRNA(Pro) is not edited by ProRS. The protein is Proline--tRNA ligase of Tropheryma whipplei (strain TW08/27) (Whipple's bacillus).